The chain runs to 121 residues: Small ribosomal subunit protein uS13 (121 aa).

Residues 91 to 121 (HRMSLPVRGQRTRTNARTRRGSRKTVAGRKK) form a disordered region. The span at 100–121 (QRTRTNARTRRGSRKTVAGRKK) shows a compositional bias: basic residues.

It belongs to the universal ribosomal protein uS13 family. In terms of assembly, part of the 30S ribosomal subunit. Forms a loose heterodimer with protein S19. Forms two bridges to the 50S subunit in the 70S ribosome.

Its function is as follows. Located at the top of the head of the 30S subunit, it contacts several helices of the 16S rRNA. In the 70S ribosome it contacts the 23S rRNA (bridge B1a) and protein L5 of the 50S subunit (bridge B1b), connecting the 2 subunits; these bridges are implicated in subunit movement. Contacts the tRNAs in the A and P-sites. This chain is Small ribosomal subunit protein uS13, found in Prochlorococcus marinus (strain MIT 9301).